We begin with the raw amino-acid sequence, 223 residues long: Ribosomal RNA small subunit methyltransferase G (223 aa).

Residues Gly-90, Leu-95, 141–142, and Arg-156 each bind S-adenosyl-L-methionine; that span reads VE.

Belongs to the methyltransferase superfamily. RNA methyltransferase RsmG family.

The protein localises to the cytoplasm. The catalysed reaction is guanosine(527) in 16S rRNA + S-adenosyl-L-methionine = N(7)-methylguanosine(527) in 16S rRNA + S-adenosyl-L-homocysteine. Specifically methylates the N7 position of guanine in position 527 of 16S rRNA. This Ralstonia nicotianae (strain ATCC BAA-1114 / GMI1000) (Ralstonia solanacearum) protein is Ribosomal RNA small subunit methyltransferase G.